The chain runs to 209 residues: Large ribosomal subunit protein uL3 (209 aa).

Positions 126-148 (HGQSRGPMAHGSRYHRRPGSMGP) are disordered.

The protein belongs to the universal ribosomal protein uL3 family. As to quaternary structure, part of the 50S ribosomal subunit. Forms a cluster with proteins L14 and L19.

Its function is as follows. One of the primary rRNA binding proteins, it binds directly near the 3'-end of the 23S rRNA, where it nucleates assembly of the 50S subunit. The polypeptide is Large ribosomal subunit protein uL3 (Listeria innocua serovar 6a (strain ATCC BAA-680 / CLIP 11262)).